Reading from the N-terminus, the 161-residue chain is Epididymal protein 13 (161 aa).

The signal sequence occupies residues 1 to 23 (MHRSEPFLKMSLLILLFLGLAEA). Asn56 is a glycosylation site (N-linked (GlcNAc...) asparagine).

It is found in the secreted. This Homo sapiens (Human) protein is Epididymal protein 13.